Consider the following 479-residue polypeptide: D-hydantoinase/dihydropyrimidinase (479 aa).

The Zn(2+) site is built by His59, His61, and Lys150. At Lys150 the chain carries N6-carboxylysine. Tyr155 contributes to the substrate binding site. 2 residues coordinate Zn(2+): His183 and His239. Ser289 contributes to the substrate binding site. Asp316 serves as a coordination point for Zn(2+). Asn337 is a binding site for substrate.

The protein belongs to the metallo-dependent hydrolases superfamily. Hydantoinase/dihydropyrimidinase family. Homotetramer. Requires Zn(2+) as cofactor. Post-translationally, carboxylation allows a single lysine to coordinate two zinc ions.

It carries out the reaction 5,6-dihydrouracil + H2O = 3-(carbamoylamino)propanoate + H(+). Catalyzes the hydrolysis of dihydropyrimidines and of the structurally related DL-5-mono-substituted hydantoins, to produce N-carbamoyl-D-amino acids. The polypeptide is D-hydantoinase/dihydropyrimidinase (dht) (Pseudomonas aeruginosa (strain ATCC 15692 / DSM 22644 / CIP 104116 / JCM 14847 / LMG 12228 / 1C / PRS 101 / PAO1)).